A 403-amino-acid chain; its full sequence is MGKSNTIVLSNEKDIQLRIQQLEERKEKRKNVKLLFSPIKTTKYFLYILKDTLVSGIRYFQTRPFLLFFIALFASLTFIAVYVPGEHQKYMGKYSDLISDCIWWVGLGVLSSIGLGTGLHTFVLYLGPHIAKVTLAATEWNSVNFNVYGANSFIQPATAMIGGVSFWMILQKVQWAALFWGAGTAIGELPPYFVARTARLKGLKLEQEKKLKEQQEKPIDEKDQPKKGLLERLSEKVPALIGNLGFFGILAFASIPNPLFDLAGITCGHFLVPFWKFFGATFIGKAVVKAHIQACFVILAFNMETLTMVISFIEDKIPFLKNKIQPILEKERQKLNSTVSANSPKSLVGLAWDCVLFLMISYFLMSIVDSSVQEYLIEKDNKKIELLKSKLEKQQPKETKKTK.

Residues 7 to 33 are a coiled coil; it reads IVLSNEKDIQLRIQQLEERKEKRKNVK. 8 helical membrane-spanning segments follow: residues 65–85, 102–122, 150–170, 175–195, 240–260, 263–283, 294–314, and 348–368; these read FLLF…YVPG, IWWV…LHTF, ANSF…WMIL, WAAL…YFVA, LIGN…NPLF, AGIT…ATFI, ACFV…SFIE, and VGLA…MSIV.

The protein belongs to the VMP1 family.

Its subcellular location is the membrane. The protein resides in the endoplasmic reticulum. The catalysed reaction is a 1,2-diacyl-sn-glycero-3-phospho-L-serine(in) = a 1,2-diacyl-sn-glycero-3-phospho-L-serine(out). It carries out the reaction cholesterol(in) = cholesterol(out). The enzyme catalyses a 1,2-diacyl-sn-glycero-3-phosphocholine(in) = a 1,2-diacyl-sn-glycero-3-phosphocholine(out). It catalyses the reaction a 1,2-diacyl-sn-glycero-3-phosphoethanolamine(in) = a 1,2-diacyl-sn-glycero-3-phosphoethanolamine(out). Phospholipid scramblase involved in lipid homeostasis and membrane dynamics processes. Required for autophagosome formation: participates in early stages of autophagosome biogenesis at the endoplasmic reticulum (ER) membrane by reequilibrating the leaflets of the ER as lipids are extracted. In addition to autophagy, involved in other processes in which phospholipid scramblase activity is required. This chain is Vacuole membrane protein 1 homolog, found in Dictyostelium discoideum (Social amoeba).